The sequence spans 981 residues: uncharacterized protein (981 aa).

In terms of domain architecture, Carrier spans 535–612 (VLLNPVAIEI…SIASIIQKKS (78 aa)). Ser571 is modified (O-(pantetheine 4'-phosphoryl)serine).

This sequence belongs to the ATP-dependent AMP-binding enzyme family.

This is an uncharacterized protein from Schizosaccharomyces pombe (strain 972 / ATCC 24843) (Fission yeast).